Here is a 321-residue protein sequence, read N- to C-terminus: 1D-myo-inositol 2-acetamido-2-deoxy-alpha-D-glucopyranoside deacetylase (321 aa).

Residues His-15, Asp-18, and His-150 each coordinate Zn(2+). Residues 280 to 321 (PEGERESDLFAGLPPATDGTGAAGAPSATGAANPADAEGGAA) form a disordered region. The segment covering 290-321 (AGLPPATDGTGAAGAPSATGAANPADAEGGAA) has biased composition (low complexity).

It belongs to the MshB deacetylase family. The cofactor is Zn(2+).

It carries out the reaction 1D-myo-inositol 2-acetamido-2-deoxy-alpha-D-glucopyranoside + H2O = 1D-myo-inositol 2-amino-2-deoxy-alpha-D-glucopyranoside + acetate. Catalyzes the deacetylation of 1D-myo-inositol 2-acetamido-2-deoxy-alpha-D-glucopyranoside (GlcNAc-Ins) in the mycothiol biosynthesis pathway. The sequence is that of 1D-myo-inositol 2-acetamido-2-deoxy-alpha-D-glucopyranoside deacetylase from Streptomyces griseus subsp. griseus (strain JCM 4626 / CBS 651.72 / NBRC 13350 / KCC S-0626 / ISP 5235).